The chain runs to 100 residues: Toxin Rv0299 (100 aa).

Its function is as follows. Toxic component of a type II toxin-antitoxin (TA) system. Upon expression in M.smegmatis inhibits colony formation. Its toxic effect is neutralized by coexpression with cognate antitoxin Rv0298/MT0312. This Mycobacterium tuberculosis (strain ATCC 25618 / H37Rv) protein is Toxin Rv0299.